Here is a 358-residue protein sequence, read N- to C-terminus: MNTFGHRFRFTTFGESHGKALGCIVDGVPAGIKIDEKFIQSEMDRRKPGQNKFATQRKEGDVVEILSGVFEGMTTGTSISMIIFNENQKSGDYSNIKDLFRPGHADFTYFNKYGIRDYRGGGRSSARETAARVAAGAIAKLLLKELNIDIRSGICEINGIQASNFDFENVKDSEIYALDKSVEEEQKNAILEARNSHNSVGGVALVNVKNCPIGLGEPLYFKLDSQIANAMMSINAVKAVEIGDGILASKVKGYENNDQIRKAGFKTNHTGGILGGISNGDEINVKVYFKATPSIFIEQETIDIYNNEVNCNLKGRHDPCVAVRGSVVAESMMALVLADMVLLNLSSKIENIKKVYEK.

NADP(+) is bound at residue Arg-46. Residues 123 to 125, 235 to 236, Gly-275, 290 to 294, and Arg-316 each bind FMN; these read RSS, NA, and KATPS.

Belongs to the chorismate synthase family. Homotetramer. It depends on FMNH2 as a cofactor.

The catalysed reaction is 5-O-(1-carboxyvinyl)-3-phosphoshikimate = chorismate + phosphate. It functions in the pathway metabolic intermediate biosynthesis; chorismate biosynthesis; chorismate from D-erythrose 4-phosphate and phosphoenolpyruvate: step 7/7. In terms of biological role, catalyzes the anti-1,4-elimination of the C-3 phosphate and the C-6 proR hydrogen from 5-enolpyruvylshikimate-3-phosphate (EPSP) to yield chorismate, which is the branch point compound that serves as the starting substrate for the three terminal pathways of aromatic amino acid biosynthesis. This reaction introduces a second double bond into the aromatic ring system. The sequence is that of Chorismate synthase from Aliarcobacter butzleri (strain RM4018) (Arcobacter butzleri).